The primary structure comprises 413 residues: Cell division protein FtsZ 2 (413 aa).

Residues 132 to 134 (GTG), Glu-171, Arg-175, and Asp-218 each bind GTP.

Belongs to the FtsZ family. Homodimer. Polymerizes to form a dynamic ring structure in a strictly GTP-dependent manner. Interacts directly with several other division proteins.

It localises to the cytoplasm. In terms of biological role, essential cell division protein that forms a contractile ring structure (Z ring) at the future cell division site. The regulation of the ring assembly controls the timing and the location of cell division. One of the functions of the FtsZ ring is to recruit other cell division proteins to the septum to produce a new cell wall between the dividing cells. Binds GTP and shows GTPase activity. The chain is Cell division protein FtsZ 2 from Thermococcus kodakarensis (strain ATCC BAA-918 / JCM 12380 / KOD1) (Pyrococcus kodakaraensis (strain KOD1)).